We begin with the raw amino-acid sequence, 491 residues long: Tryptophan 5-hydroxylase 2 (491 aa).

Serine 19 is subject to Phosphoserine. A disordered region spans residues 33-63 (NLTVNKSNSGKNDDKKGNKGSSRSETAPDSG). Residues 66–141 (AVVFSLRNEV…TIVTLNPPEN (76 aa)) enclose the ACT domain. The Fe cation site is built by histidine 319, histidine 324, and glutamate 364.

The protein belongs to the biopterin-dependent aromatic amino acid hydroxylase family. In terms of assembly, interacts with DNAJC12. Requires Fe(2+) as cofactor.

It carries out the reaction (6R)-L-erythro-5,6,7,8-tetrahydrobiopterin + L-tryptophan + O2 = 5-hydroxy-L-tryptophan + (4aS,6R)-4a-hydroxy-L-erythro-5,6,7,8-tetrahydrobiopterin. Its pathway is aromatic compound metabolism; serotonin biosynthesis; serotonin from L-tryptophan: step 1/2. The protein is Tryptophan 5-hydroxylase 2 (TPH2) of Equus caballus (Horse).